The sequence spans 345 residues: GTPase Obg (345 aa).

One can recognise an Obg domain in the interval 1-159 (MRFIDEASIT…FHLKLELKLL (159 aa)). Residues 160–329 (ADVGIVGLPN…LIQILARQIA (170 aa)) enclose the OBG-type G domain. GTP-binding positions include 166–173 (GLPNAGKS), 191–195 (FTTLT), 213–216 (DIPG), 283–286 (NKID), and 310–312 (SAA). Residues Ser173 and Thr193 each contribute to the Mg(2+) site.

This sequence belongs to the TRAFAC class OBG-HflX-like GTPase superfamily. OBG GTPase family. Monomer. Mg(2+) is required as a cofactor.

The protein localises to the cytoplasm. Functionally, an essential GTPase which binds GTP, GDP and possibly (p)ppGpp with moderate affinity, with high nucleotide exchange rates and a fairly low GTP hydrolysis rate. Plays a role in control of the cell cycle, stress response, ribosome biogenesis and in those bacteria that undergo differentiation, in morphogenesis control. In Desulforapulum autotrophicum (strain ATCC 43914 / DSM 3382 / VKM B-1955 / HRM2) (Desulfobacterium autotrophicum), this protein is GTPase Obg.